The following is a 395-amino-acid chain: Protein maternal effect lethal 26 (395 aa).

The MATH domain maps to 41 to 162; the sequence is KVQHTWTVKN…RDMIIVNVEI (122 aa). Residues 201–269 enclose the BTB domain; the sequence is CDFAINVNGK…IYCGRCNKDI (69 aa).

In terms of assembly, interacts (via BTB domain) with cul-3. Seems to be a component of a E3 ubiquitin-protein ligase complex containing cul-3. Interacts (probably via MATH domain) with mei-1, which targets mei-1 for ubiquitin-mediated proteolysis. Interacts (probably via MATH domain) with ppfr-1, the regulatory subunit of the PP4 complex; targets ppfr-1 for ubiquitin-mediated proteolysis. May interact (via MATH domain) with unc-89 (via Ig-like C2-type domain 2/3 and, Ig-like C2-type domain 50 and fibronectin type-III domain 2). As to expression, expressed in body wall muscles.

It is found in the cytoplasm. The protein localises to the myofibril. It localises to the sarcomere. Its subcellular location is the m line. The protein resides in the i band. It participates in protein modification; protein ubiquitination. Its function is as follows. Probable substrate-specific adapter of an E3 ubiquitin-protein ligase complex which mediates the ubiquitination and subsequent proteasomal degradation of target proteins. Controls degradation of microtubule severing protein mei-1 after meiosis. Controls degradation of ppfr-1, the regulatory subunit of PP4 complex, after meiosis. In body wall muscles, involved in the organization of myosin thick filaments, likely by regulating the degradation of mei-1 downstream of unc-89. May also activate the TORC1 pathway. This chain is Protein maternal effect lethal 26 (mel-26), found in Caenorhabditis elegans.